The sequence spans 141 residues: DUF35 domain-containing scaffold protein (141 aa).

Positions 30, 33, 44, and 47 each coordinate Zn(2+).

Belongs to the scaffold protein DUF35 family. In terms of assembly, interacts with acetoacetyl-CoA thiolase and HMG-CoA synthase (HMGCS) that catalyzes the first and second step in the mevalonate pathway, respectively.

Functions as a scaffold to connect the acetoacetyl-CoA thiolase and HMG-CoA synthase (HMGCS) dimers in the channeling thiolase/HMGCS complex, which allows for efficient coupling of the endergonic thiolase reaction with the exergonic HMGCS reaction. This Methanocaldococcus jannaschii (strain ATCC 43067 / DSM 2661 / JAL-1 / JCM 10045 / NBRC 100440) (Methanococcus jannaschii) protein is DUF35 domain-containing scaffold protein.